The following is a 453-amino-acid chain: Phosphoglucosamine mutase (453 aa).

S110 acts as the Phosphoserine intermediate in catalysis. Positions 110, 248, 250, and 252 each coordinate Mg(2+). S110 carries the phosphoserine modification.

This sequence belongs to the phosphohexose mutase family. It depends on Mg(2+) as a cofactor. In terms of processing, activated by phosphorylation.

It carries out the reaction alpha-D-glucosamine 1-phosphate = D-glucosamine 6-phosphate. Catalyzes the conversion of glucosamine-6-phosphate to glucosamine-1-phosphate. The polypeptide is Phosphoglucosamine mutase (Mycolicibacterium smegmatis (strain ATCC 700084 / mc(2)155) (Mycobacterium smegmatis)).